The primary structure comprises 278 residues: Large ribosomal subunit protein uL2 (278 aa).

2 disordered regions span residues 27–58 (STPE…GGGH) and 224–278 (VVMN…GKKR). Over residues 37 to 58 (LHGKGGRNAHGRITTRHKGGGH) the composition is skewed to basic residues. Positions 253-268 (PEGRTRKPNKPSDKLI) are enriched in basic and acidic residues. Basic residues predominate over residues 269 to 278 (VRRRRTGKKR).

It belongs to the universal ribosomal protein uL2 family. Part of the 50S ribosomal subunit. Forms a bridge to the 30S subunit in the 70S ribosome.

One of the primary rRNA binding proteins. Required for association of the 30S and 50S subunits to form the 70S ribosome, for tRNA binding and peptide bond formation. It has been suggested to have peptidyltransferase activity; this is somewhat controversial. Makes several contacts with the 16S rRNA in the 70S ribosome. The polypeptide is Large ribosomal subunit protein uL2 (Mycobacterium sp. (strain KMS)).